The primary structure comprises 535 residues: CTP synthase (535 aa).

The segment at methionine 1–leucine 267 is amidoligase domain. Serine 13 serves as a coordination point for CTP. UTP is bound at residue serine 13. Serine 14–isoleucine 19 contributes to the ATP binding site. Tyrosine 54 lines the L-glutamine pocket. An ATP-binding site is contributed by aspartate 71. Residues aspartate 71 and glutamate 141 each coordinate Mg(2+). Residues aspartate 148–glutamate 150, lysine 188–glutamine 193, and lysine 224 each bind CTP. UTP is bound by residues lysine 188–glutamine 193 and lysine 224. Arginine 240–alanine 242 serves as a coordination point for ATP. Residues lysine 292–serine 534 enclose the Glutamine amidotransferase type-1 domain. L-glutamine is bound at residue glycine 354. The Nucleophile; for glutamine hydrolysis role is filled by cysteine 381. L-glutamine contacts are provided by residues leucine 382 to glutamine 385, glutamate 405, and arginine 462. Active-site residues include histidine 507 and glutamate 509.

This sequence belongs to the CTP synthase family. Homotetramer.

The catalysed reaction is UTP + L-glutamine + ATP + H2O = CTP + L-glutamate + ADP + phosphate + 2 H(+). The enzyme catalyses L-glutamine + H2O = L-glutamate + NH4(+). It catalyses the reaction UTP + NH4(+) + ATP = CTP + ADP + phosphate + 2 H(+). Its pathway is pyrimidine metabolism; CTP biosynthesis via de novo pathway; CTP from UDP: step 2/2. With respect to regulation, allosterically activated by GTP, when glutamine is the substrate; GTP has no effect on the reaction when ammonia is the substrate. The allosteric effector GTP functions by stabilizing the protein conformation that binds the tetrahedral intermediate(s) formed during glutamine hydrolysis. Inhibited by the product CTP, via allosteric rather than competitive inhibition. Catalyzes the ATP-dependent amination of UTP to CTP with either L-glutamine or ammonia as the source of nitrogen. Regulates intracellular CTP levels through interactions with the four ribonucleotide triphosphates. In Bacillus thuringiensis subsp. konkukian (strain 97-27), this protein is CTP synthase.